Consider the following 198-residue polypeptide: ATP-dependent Clp protease proteolytic subunit (198 aa).

Catalysis depends on Ser-98, which acts as the Nucleophile. The active site involves His-123.

It belongs to the peptidase S14 family. Fourteen ClpP subunits assemble into 2 heptameric rings which stack back to back to give a disk-like structure with a central cavity, resembling the structure of eukaryotic proteasomes.

It localises to the cytoplasm. The enzyme catalyses Hydrolysis of proteins to small peptides in the presence of ATP and magnesium. alpha-casein is the usual test substrate. In the absence of ATP, only oligopeptides shorter than five residues are hydrolyzed (such as succinyl-Leu-Tyr-|-NHMec, and Leu-Tyr-Leu-|-Tyr-Trp, in which cleavage of the -Tyr-|-Leu- and -Tyr-|-Trp bonds also occurs).. Cleaves peptides in various proteins in a process that requires ATP hydrolysis. Has a chymotrypsin-like activity. Plays a major role in the degradation of misfolded proteins. The polypeptide is ATP-dependent Clp protease proteolytic subunit (Ehrlichia ruminantium (strain Welgevonden)).